Reading from the N-terminus, the 315-residue chain is MSVPTVTSWTGAPILLGVIGGSGLYKLDSITPVAEISISTPWGSASSPITIAKTSAGNHVAFLARHGRDHAILPSNVPNLANIAALKHLGVKAIVAFSAVGSLREEIAPKDFVIPSQIIDRTKGVRRASFFGFGDEESVVAHAGFGDPFCETLRPIVYSTVQATLASHPIKVHTDKTVVCMEGPQFSTRAESLMYRTWGGDIINMSVLPEAKLAREAEIAYVLIATATDYDAWRPSTAAVNVAEVMESLKANVEASNLVTTKVLDRVWLEIDTDEKPAVKNIKDSTKFSIMTKSQVIPDKAKQNLRFLHPWFARD.

Residues Ser22, 65-66 (RH), and 98-99 (SA) each bind phosphate. Met205 serves as a coordination point for substrate. Residue Ser206 coordinates phosphate. Position 229–231 (229–231 (DYD)) interacts with substrate.

The protein belongs to the PNP/MTAP phosphorylase family. MTAP subfamily. In terms of assembly, homotrimer.

The protein resides in the cytoplasm. The protein localises to the nucleus. It catalyses the reaction S-methyl-5'-thioadenosine + phosphate = 5-(methylsulfanyl)-alpha-D-ribose 1-phosphate + adenine. It functions in the pathway amino-acid biosynthesis; L-methionine biosynthesis via salvage pathway; S-methyl-5-thio-alpha-D-ribose 1-phosphate from S-methyl-5'-thioadenosine (phosphorylase route): step 1/1. Catalyzes the reversible phosphorylation of S-methyl-5'-thioadenosine (MTA) to adenine and 5-methylthioribose-1-phosphate. Involved in the breakdown of MTA, a major by-product of polyamine biosynthesis. Responsible for the first step in the methionine salvage pathway after MTA has been generated from S-adenosylmethionine. Has broad substrate specificity with 6-aminopurine nucleosides as preferred substrates. The polypeptide is S-methyl-5'-thioadenosine phosphorylase (Mycosarcoma maydis (Corn smut fungus)).